The sequence spans 911 residues: Transcription factor E2F7 (911 aa).

Ser94 bears the Phosphoserine mark. Residues 141–210 mediate DNA binding; it reads RKQKSLGLLC…VAKNQYSWHG (70 aa). Disordered regions lie at residues 239 to 281, 409 to 433, and 565 to 706; these read QKEL…ANSR, SFNS…PYRQ, and SPGS…SPLQ. Residues 243-257 are compositionally biased toward basic and acidic residues; it reads NPIDHKSGERRRDGC. The DNA-binding element occupies 281–366; it reads RKDKSLKIMS…GRKPAFKWIG (86 aa). Residue Ser409 is modified to Phosphoserine. The segment covering 415–424 has biased composition (basic and acidic residues); it reads ASERTQRKVN. Gly residues predominate over residues 566–579; sequence PGSGSGSGSVGGGS. Residues 599–621 are compositionally biased toward basic and acidic residues; sequence ERRLQEEEEEPATKRQCRDHEDG. Polar residues predominate over residues 669–687; that stretch reads KATTNGFVSSEWGNPCSNT. Basic and acidic residues predominate over residues 688-698; it reads EIEKPSEENES. Ser840 is subject to Phosphoserine. Residues 873–911 form a disordered region; the sequence is FFKTPGSLGDPVLRRKERNQSRSSSSAQRRLEISSGGTD.

This sequence belongs to the E2F/DP family. In terms of assembly, homodimer and heterodimer: mainly forms homodimers and, to a lesser extent, heterodimers with E2F8. Dimerization is important for DNA-binding. Interacts with HIF1A. Interacts with MN1.

Its subcellular location is the nucleus. Atypical E2F transcription factor that participates in various processes such as angiogenesis, polyploidization of specialized cells and DNA damage response. Mainly acts as a transcription repressor that binds DNA independently of DP proteins and specifically recognizes the E2 recognition site 5'-TTTC[CG]CGC-3'. Directly represses transcription of classical E2F transcription factors such as E2F1. Acts as a regulator of S-phase by recognizing and binding the E2-related site 5'-TTCCCGCC-3' and mediating repression of G1/S-regulated genes. Plays a key role in polyploidization of cells in placenta and liver by regulating the endocycle, probably by repressing genes promoting cytokinesis and antagonizing action of classical E2F proteins (E2F1, E2F2 and/or E2F3). Required for placental development by promoting polyploidization of trophoblast giant cells. Also involved in DNA damage response: up-regulated by p53/TP53 following genotoxic stress and acts as a downstream effector of p53/TP53-dependent repression by mediating repression of indirect p53/TP53 target genes involved in DNA replication. Acts as a promoter of sprouting angiogenesis, possibly by acting as a transcription activator: associates with HIF1A, recognizes and binds the VEGFA promoter, which is different from canonical E2 recognition site, and activates expression of the VEGFA gene. Acts as a negative regulator of keratinocyte differentiation. The polypeptide is Transcription factor E2F7 (E2F7) (Bos taurus (Bovine)).